Here is a 122-residue protein sequence, read N- to C-terminus: Large ribosomal subunit protein uL14 (122 aa).

This sequence belongs to the universal ribosomal protein uL14 family. Part of the 50S ribosomal subunit. Forms a cluster with proteins L3 and L19. In the 70S ribosome, L14 and L19 interact and together make contacts with the 16S rRNA in bridges B5 and B8.

In terms of biological role, binds to 23S rRNA. Forms part of two intersubunit bridges in the 70S ribosome. The polypeptide is Large ribosomal subunit protein uL14 (Chlamydia pneumoniae (Chlamydophila pneumoniae)).